We begin with the raw amino-acid sequence, 367 residues long: 2-aminoethylphosphonate--pyruvate transaminase (367 aa).

Position 194 is an N6-(pyridoxal phosphate)lysine (Lys-194).

This sequence belongs to the class-V pyridoxal-phosphate-dependent aminotransferase family. PhnW subfamily. Homodimer. Requires pyridoxal 5'-phosphate as cofactor.

The enzyme catalyses (2-aminoethyl)phosphonate + pyruvate = phosphonoacetaldehyde + L-alanine. In terms of biological role, involved in phosphonate degradation. This chain is 2-aminoethylphosphonate--pyruvate transaminase, found in Salmonella paratyphi B (strain ATCC BAA-1250 / SPB7).